We begin with the raw amino-acid sequence, 125 residues long: Small ribosomal subunit protein uS13 (125 aa).

Belongs to the universal ribosomal protein uS13 family. In terms of assembly, part of the 30S ribosomal subunit. Forms a loose heterodimer with protein S19. Forms two bridges to the 50S subunit in the 70S ribosome.

In terms of biological role, located at the top of the head of the 30S subunit, it contacts several helices of the 16S rRNA. In the 70S ribosome it contacts the 23S rRNA (bridge B1a) and protein L5 of the 50S subunit (bridge B1b), connecting the 2 subunits; these bridges are implicated in subunit movement. Contacts the tRNAs in the A and P-sites. The polypeptide is Small ribosomal subunit protein uS13 (Rickettsia prowazekii (strain Madrid E)).